The chain runs to 245 residues: PF03932 family protein CutC (245 aa).

It belongs to the CutC family.

It is found in the cytoplasm. In Rhizobium meliloti (strain 1021) (Ensifer meliloti), this protein is PF03932 family protein CutC.